A 1440-amino-acid chain; its full sequence is Tensin-3 (1440 aa).

A Phosphatase tensin-type domain is found at 1–170; the sequence is MEDSHELDLT…QFLSGLLSGA (170 aa). The C2 tensin-type domain occupies 175–301; the sequence is TSPLFLHFVI…GKIELVFSAT (127 aa). Thr323 carries the post-translational modification Phosphothreonine. 3 positions are modified to phosphoserine: Ser332, Ser361, and Ser370. Residues 358 to 421 are disordered; the sequence is RKKSASDTGI…GARRGLSPQE (64 aa). Polar residues-rich tracts occupy residues 363–380 and 387–400; these read SDTG…TSSP and LSVS…TASA. Phosphoserine is present on residues Ser440, Ser516, and Ser571. 3 disordered regions span residues 607 to 662, 675 to 694, and 740 to 762; these read GEAR…LCPG, TNGV…PTLD, and SGRL…DPIG. Residues 613 to 622 show a composition bias toward polar residues; it reads SRSTVDNTGL. Thr632 carries the phosphothreonine modification. Composition is skewed to polar residues over residues 646–659 and 677–690; these read GISN…TQQL and GVHQ…SPGS. Ser648, Ser687, and Ser690 each carry phosphoserine. Ser769 is subject to Phosphoserine. Tyr773 carries the phosphotyrosine modification. Residues Ser804, Ser860, Ser894, and Ser960 each carry the phosphoserine modification. 4 disordered regions span residues 846-881, 887-906, 920-975, and 1067-1123; these read ETPY…PRGC, HTVG…LRAD, SCTV…SGKD, and TVSP…HSGS. Residues 855–864 show a composition bias toward pro residues; the sequence is RYPPFSPPEP. Polar residues-rich tracts occupy residues 943 to 960 and 1067 to 1087; these read VESS…SHPS and TVSP…NVSL. A compositionally biased stretch (basic and acidic residues) spans 1094 to 1104; sequence PEKKRASEGDR. The segment covering 1105 to 1123 has biased composition (low complexity); that stretch reads SLGSVSPSSSGFSSPHSGS. Ser1144 and Ser1149 each carry phosphoserine. The SH2 domain maps to 1167–1277; sequence WYKADISREQ…ALPCKLLIPE (111 aa). A phosphoserine mark is found at Ser1288 and Ser1436. The PTB domain occupies 1305–1439; sequence ACNVWYLNSV…SKVMIGSPKK (135 aa).

It belongs to the PTEN phosphatase protein family. In terms of assembly, interacts with EGFR; EGF promotes the interaction with EGFR. Interacts with PTK2/FAK1 and BCAR1. Tyrosine phosphorylation is critical for these interactions. Interacts with Rho GTPase-activating protein DLC1 and with the regulatory p85 subunit of the PI3K kinase complex; in resting cells, interacts (via C2 tensin-type domain) with DLC1 but, following growth factor stimulation, TNS3 is phosphorylated which leads to weakened interaction with DLC1 and enhanced interaction (via C2 tensin-type domain) with p85 while DLC1 interaction with PTEN increases. Interacts (when phosphorylated on the SH2 domain) with integrins ITGB1, ITGB3 and ITGB5 and with scaffolding protein PEAK1 (phosphorylated on 'Tyr-632'); these interactions mediate the association of PEAK1 with ITGB1, ITGB3 and ITGB5. Interacts (via N-terminus) with DOCK5 (via N-terminus); the interaction increases DOCK5 guanine nucleotide exchange activity towards Rac. Interacts with receptor tyrosine kinase MET. Phosphorylated on Ser/Thr and Tyr residues. Phosphorylated on Thr-323 in the C2-type tensin domain following EGF stimulation which changes its binding preference from DLC1 to the p85 regulatory subunit of the PI3K kinase complex. EGF induces tyrosine phosphorylation in a time- and dose-dependent manner. Phosphorylation of the SH2 domain enhances interaction with PEAK1. As to expression, expressed in brain, heart, lung, liver, spleen, kidney, stomach, small intestine, skeletal muscle, skin, thymus, testis, uterus, placenta, aorta and trachea.

It is found in the cell junction. The protein resides in the focal adhesion. Its subcellular location is the cell projection. The protein localises to the podosome. Its function is as follows. May act as a protein phosphatase and/or a lipid phosphatase. Involved in the dissociation of the integrin-tensin-actin complex. EGF activates TNS4 and down-regulates TNS3 which results in capping the tail of ITGB1. Increases DOCK5 guanine nucleotide exchange activity towards Rac and plays a role in osteoclast podosome organization. Enhances RHOA activation in the presence of DLC1. Required for growth factor-induced epithelial cell migration; growth factor stimulation induces TNS3 phosphorylation which changes its binding preference from DLC1 to the p85 regulatory subunit of the PI3K kinase complex, displacing PI3K inhibitor PTEN and resulting in translocation of the TNS3-p85 complex to the leading edge of migrating cells to promote RAC1 activation. Meanwhile, PTEN switches binding preference from p85 to DLC1 and the PTEN-DLC1 complex translocates to the posterior of migrating cells to activate RHOA. Acts as an adapter protein by bridging the association of scaffolding protein PEAK1 with integrins ITGB1, ITGB3 and ITGB5 which contributes to the promotion of cell migration. Controls tonsil-derived mesenchymal stem cell proliferation and differentiation by regulating the activity of integrin ITGB1. This Mus musculus (Mouse) protein is Tensin-3 (Tns3).